The chain runs to 289 residues: G1/S-specific cyclin-D2 (289 aa).

A Cyclin N-terminal domain is found at 26–151 (LQNLLTIEER…VLGKLKWNLA (126 aa)). The tract at residues 264 to 289 (QHNAGSKSVEDPDQATTPTDVRDVDL) is disordered. Phosphoserine is present on S271. Residue T280 is modified to Phosphothreonine.

This sequence belongs to the cyclin family. Cyclin D subfamily. As to quaternary structure, interacts with either CDK4 or CDK6 protein kinase to form a serine/threonine kinase holoenzyme complex. The cyclin subunit imparts substrate specificity to the complex. In terms of processing, phosphorylation at Thr-280 by MAP kinases is required for ubiquitination and degradation by the DCX(AMBRA1) complex. Ubiquitinated by the DCX(AMBRA1) complex during the transition from G1 to S cell phase, leading to its degradation: ubiquitination is dependent on Thr-280 phosphorylation. The DCX(AMBRA1) complex represents the major regulator of CCND2 stability during the G1/S transition. Polyubiquitinated by the SCF(FBXL2) complex, leading to proteasomal degradation.

The protein localises to the nucleus. It is found in the cytoplasm. The protein resides in the nucleus membrane. In terms of biological role, regulatory component of the cyclin D2-CDK4 (DC) complex that phosphorylates and inhibits members of the retinoblastoma (RB) protein family including RB1 and regulates the cell-cycle during G(1)/S transition. Phosphorylation of RB1 allows dissociation of the transcription factor E2F from the RB/E2F complex and the subsequent transcription of E2F target genes which are responsible for the progression through the G(1) phase. Hypophosphorylates RB1 in early G(1) phase. Cyclin D-CDK4 complexes are major integrators of various mitogenenic and antimitogenic signals. The sequence is that of G1/S-specific cyclin-D2 from Mus musculus (Mouse).